A 263-amino-acid polypeptide reads, in one-letter code: Indole-3-glycerol phosphate synthase (263 aa).

Belongs to the TrpC family.

It catalyses the reaction 1-(2-carboxyphenylamino)-1-deoxy-D-ribulose 5-phosphate + H(+) = (1S,2R)-1-C-(indol-3-yl)glycerol 3-phosphate + CO2 + H2O. It participates in amino-acid biosynthesis; L-tryptophan biosynthesis; L-tryptophan from chorismate: step 4/5. This is Indole-3-glycerol phosphate synthase from Laribacter hongkongensis (strain HLHK9).